The sequence spans 839 residues: AMP deaminase (839 aa).

Residues Leu-8–Phe-28 traverse the membrane as a helical segment. The tract at residues Glu-40–Glu-167 is disordered. The segment covering Asp-85–Thr-94 has biased composition (gly residues). Phosphoserine is present on residues Ser-134 and Ser-140. Acidic residues predominate over residues Ser-153–Asn-162. The residue at position 203 (Ser-203) is a Phosphoserine. Residue Ala-289–Ser-296 participates in ATP binding. Zn(2+)-binding residues include His-391 and His-393. Substrate is bound by residues His-393 and Lys-462–Tyr-467. His-659 contributes to the Zn(2+) binding site. Glu-662 is a substrate binding site. The Proton acceptor role is filled by His-681. A Zn(2+)-binding site is contributed by Asp-736. Asp-737–Gln-740 is a binding site for substrate.

It belongs to the metallo-dependent hydrolases superfamily. Adenosine and AMP deaminases family. In terms of assembly, homodimer. Interacts with AHK4. Interacts with EER5. It depends on Zn(2+) as a cofactor. As to expression, expressed in seedlings, roots, leaves, flowers, pollen grains, pollen tubes and siliques, and at a lower level in stems.

The protein localises to the membrane. It localises to the microsome membrane. The enzyme catalyses AMP + H2O + H(+) = IMP + NH4(+). Its pathway is purine metabolism; IMP biosynthesis via salvage pathway; IMP from AMP: step 1/1. Its activity is regulated as follows. Activated by ATP. Activated by sulfate ions (in vitro). Inhibited by phosphate ions. AMP deaminase plays a critical role in energy metabolism. Essential for the transition from zygote to embryo. This is AMP deaminase from Arabidopsis thaliana (Mouse-ear cress).